The sequence spans 105 residues: MADFLGMMKQAAQLQSKMKAMQEELEHIEVEGISGGGLVSVRMTAKMEVKTIKIDPSLINADEAGVLEDLLVTALADAHRKAESAMQEKMQALTGGLSLPPGLGL.

It belongs to the YbaB/EbfC family. As to quaternary structure, homodimer.

It is found in the cytoplasm. Its subcellular location is the nucleoid. Binds to DNA and alters its conformation. May be involved in regulation of gene expression, nucleoid organization and DNA protection. The polypeptide is Nucleoid-associated protein RPC_4847 (Rhodopseudomonas palustris (strain BisB18)).